The following is a 104-amino-acid chain: Large ribosomal subunit protein uL24 (104 aa).

This sequence belongs to the universal ribosomal protein uL24 family. In terms of assembly, part of the 50S ribosomal subunit.

Functionally, one of two assembly initiator proteins, it binds directly to the 5'-end of the 23S rRNA, where it nucleates assembly of the 50S subunit. In terms of biological role, one of the proteins that surrounds the polypeptide exit tunnel on the outside of the subunit. The protein is Large ribosomal subunit protein uL24 of Colwellia psychrerythraea (strain 34H / ATCC BAA-681) (Vibrio psychroerythus).